The chain runs to 661 residues: Transcription factor ccg-8 (661 aa).

Residues 1 to 11 (MEHHHHHRHMH) are compositionally biased toward basic residues. Disordered regions lie at residues 1–69 (MEHH…QADN), 107–243 (SASS…LDDP), 255–279 (LKTD…DQNQ), and 354–398 (RTKS…RRTS). Composition is skewed to low complexity over residues 23–43 (HQQY…QHQQ) and 107–140 (SASS…SSNR). Residues 173–187 (DHSLPSIASLNVGSS) are compositionally biased toward polar residues. The span at 192–203 (QPTPTPQPPPKF) shows a compositional bias: pro residues. Residues 357-366 (SSSDTRESGQ) are compositionally biased toward basic and acidic residues.

Transcription factor that plays a pivotal role in azole adaptive responses by regulating the drug accumulation in the cells. Affects the transcriptional responses to ketoconazole of many genes, including the target gene (erg11), an azole transporter gene (cdr4), a hexose transporter gene (hxt13), a stress response gene (kts-1), two transcription factor genes (named kts-2 and fsd-1/ndt80). Also regulates phospholipid synthesis that is not involved in azole resistance. In Neurospora crassa (strain ATCC 24698 / 74-OR23-1A / CBS 708.71 / DSM 1257 / FGSC 987), this protein is Transcription factor ccg-8.